The following is a 519-amino-acid chain: Histidine--tRNA ligase, cytoplasmic (519 aa).

L-histidine contacts are provided by residues 135–137 (DLT), Arg-162, Gln-178, Asp-182, Arg-331, and 335–336 (YY).

This sequence belongs to the class-II aminoacyl-tRNA synthetase family. Homodimer.

It localises to the cytoplasm. The catalysed reaction is tRNA(His) + L-histidine + ATP = L-histidyl-tRNA(His) + AMP + diphosphate + H(+). Functionally, catalyzes the ATP-dependent ligation of histidine to the 3'-end of its cognate tRNA, via the formation of an aminoacyl-adenylate intermediate (His-AMP). Plays a role in axon guidance. The protein is Histidine--tRNA ligase, cytoplasmic (hars1) of Takifugu rubripes (Japanese pufferfish).